The following is a 626-amino-acid chain: Chaperone protein HtpG (626 aa).

Positions 1 to 331 (MSETVERHEF…TDDLPLNVSR (331 aa)) are a; substrate-binding. Residues 332–544 (EMLQSTPTLQ…GMGPDLQMQR (213 aa)) are b. The c stretch occupies residues 545-626 (LLRRAGRGFG…GTAAKPAESA (82 aa)).

It belongs to the heat shock protein 90 family. In terms of assembly, homodimer.

The protein localises to the cytoplasm. Functionally, molecular chaperone. Has ATPase activity. The polypeptide is Chaperone protein HtpG (Methylorubrum extorquens (strain PA1) (Methylobacterium extorquens)).